Here is a 612-residue protein sequence, read N- to C-terminus: Alpha-glycerophosphate oxidase (612 aa).

21–49 (DLLIIGGGITGAGVALQAAASGLDTGLIE) contacts FAD. The span at 398-408 (VETSTSEKELD) shows a compositional bias: basic and acidic residues. Positions 398 to 418 (VETSTSEKELDPSAVSRGSSF) are disordered.

Belongs to the FAD-dependent glycerol-3-phosphate dehydrogenase family. The cofactor is FAD.

The protein localises to the cytoplasm. The catalysed reaction is sn-glycerol 3-phosphate + O2 = dihydroxyacetone phosphate + H2O2. This chain is Alpha-glycerophosphate oxidase (glpO), found in Streptococcus pyogenes serotype M3 (strain ATCC BAA-595 / MGAS315).